The following is a 653-amino-acid chain: MKFSVLKLDVGKREVEAQEIEREDIFGVVDYGIMRHNELRTYEVDPYDPRNIVIFGIGPFAGSVLPGSHRLVFFFRSPLYGGLFPSTMGGAGYQFKNVGVDFVEIHGKAEKPTVIILKNDGEKLSVDFYEIELEKLLDVWKEYKGEEGVYALTQYLLDNLASVFEGMEFRIAVVGPAALNTNMGAIFSQALRNGKRAVGSEDWAARGGPGSVLLRAHNVVAIAFGGKKRKREFPGEDISDVKVAKRVVEGIHKKAQRDVINESTVKYRYNPKLNTGGTFGGNYPAEGDLVPVLNWQMPYIPKEERIKIHELIMKYYWEPFNKESIQPKNWTTCGEPCPVVCKKHRKGHHVEYEPYEANGPLSGSIYLYASDISVHAVDAMGFDAIEFGGTAAWVLELVHKGLLKPAEVGISDVPEFTKDDLITKPVEASEKNAKLVAELAHSIAFGKTEVARIIGMGKRKASKILDEKFKDRLSYGESFKDYGVYTPLGDDGEINPTMYWAIGNFIPLPIQGRYWTFYQFGVFLEPEELAQKIVSSALWEFWYDNVGWCRFHRGWMKKVLKALFMEAYGVSIDMEEHAKKQIRKLIDYLKKAGYEPVFWDSMRVIDLVAKGSEEFGNENWAKKFKEDKIGTAKEYLKRVLDAYSQLIGTEWTL.

Tungstopterin is bound by residues Arg-70, Gly-89, Arg-196, Ala-197, Gly-199, and Arg-206. Positions 333 and 337 each coordinate [4Fe-4S] cluster. 3 residues coordinate tungstopterin: Asp-378, Asp-383, and Asp-544. A [4Fe-4S] cluster-binding site is contributed by Cys-549.

Belongs to the AOR/FOR family. Monomer. Requires [4Fe-4S] cluster as cofactor. Tungstopterin serves as cofactor.

It catalyses the reaction D-glyceraldehyde 3-phosphate + 2 oxidized [2Fe-2S]-[ferredoxin] + H2O = (2R)-3-phosphoglycerate + 2 reduced [2Fe-2S]-[ferredoxin] + 3 H(+). With respect to regulation, sensitive to oxygen. Activity increased by 58%-93% in the presence of acetyl phosphate, 3-phosphoglycerate or 2,3-bisphosphoglycerate at 10 mM concentration. Inhibited by up to 25% in the presence of crotonaldehyde or formaldehyde at 10 mM concentration. Inhibited by up to 50% by sodium dithionate. 3.5-fold increase in activity observed by addition of potassium phosphate or sodium arsenate at 200 mM concentration. Activity enhanced by potassium chloride, sodium citrate or sodium sulfate at 200 mM concentration. Functionally, catalyzes the oxidation of glyceraldehyde-3-phosphate to 3-phosphoglycerate. Uses ferredoxin as electron acceptor. In vitro can also use benzyl viologen, but not NADP or NAD, as electron acceptor. Probably acts as a glycolytic enzyme in place of glyceraldehyde-3-phosphate dehydrogenase (GAPDH) and phosphoglycerate kinase (PGK) in an unusual Emden-Meyerhof glycolysis. In Pyrococcus furiosus (strain ATCC 43587 / DSM 3638 / JCM 8422 / Vc1), this protein is Glyceraldehyde-3-phosphate:ferredoxin oxidoreductase.